Consider the following 226-residue polypeptide: Ribosome maturation factor RimP (226 aa).

The segment at 190-226 (VFPDTTRPQPGGKTGQRKKAQPKKPARGGAPHDDTTD) is disordered. A compositionally biased stretch (basic residues) spans 204 to 215 (GQRKKAQPKKPA).

The protein belongs to the RimP family.

Its subcellular location is the cytoplasm. Required for maturation of 30S ribosomal subunits. The polypeptide is Ribosome maturation factor RimP (Nitratidesulfovibrio vulgaris (strain DSM 19637 / Miyazaki F) (Desulfovibrio vulgaris)).